A 375-amino-acid polypeptide reads, in one-letter code: Protein RIC-3 (375 aa).

Positions 1–29 (MALSAVQKVVLFSCLVLCVSLLLPRAYIA) are cleaved as a signal peptide. Residues 30–90 (RGKPAAQEGN…GGGGGTRPSL (61 aa)) are Lumenal-facing. The span at 38–47 (GNTGLFQSSG) shows a compositional bias: polar residues. The interval 38 to 63 (GNTGLFQSSGHHPKPTDGRPGGAHFP) is disordered. A helical membrane pass occupies residues 91-111 (VGQIIPIYGFGILLYILYILF). The Cytoplasmic portion of the chain corresponds to 112-375 (KLSSKGKSTK…RKRNTKGIEY (264 aa)). Residues 135–165 (KRKITDYELSQLQDKLKETEEAMEKIISRLG) adopt a coiled-coil conformation. Residues 251–375 (SAEQVAEQMG…RKRNTKGIEY (125 aa)) form a disordered region. Residues 286 to 296 (GDQQAQGTISA) are compositionally biased toward polar residues. Over residues 305–319 (EDIEEDEDEDEDPEV) the composition is skewed to acidic residues. Positions 365–375 (LRKRNTKGIEY) are enriched in basic residues.

This sequence belongs to the ric-3 family.

It localises to the endoplasmic reticulum membrane. Molecular chaperone which facilitates proper subunit assembly andsurface trafficking of alpha-7 (CHRNA7) and alpha-8 (CHRNA8) nicotinic acetylcholine receptors. May also promote functional expression of homomeric serotoninergic 5-HT3 receptors, and of heteromeric acetylcholine receptors. The sequence is that of Protein RIC-3 (ric3) from Xenopus tropicalis (Western clawed frog).